The sequence spans 92 residues: UPF0473 protein OB2006 (92 aa).

The protein belongs to the UPF0473 family.

The sequence is that of UPF0473 protein OB2006 from Oceanobacillus iheyensis (strain DSM 14371 / CIP 107618 / JCM 11309 / KCTC 3954 / HTE831).